We begin with the raw amino-acid sequence, 858 residues long: Cone cGMP-specific 3',5'-cyclic phosphodiesterase subunit alpha' (858 aa).

GAF domains lie at 75 to 224 (TPEQ…SIIL) and 256 to 433 (DVER…GWSL). Residues Ser97, Asp116, 169–172 (DKQT), and Thr176 each bind 3',5'-cyclic GMP. The PDEase domain maps to 486 to 819 (EEKQLVAILK…VEWKSLADEY (334 aa)). Catalysis depends on His562, which acts as the Proton donor. A divalent metal cation-binding residues include His566, His602, Asp603, and Asp723. Residues 830–852 (AKKQEGGAEKAAEDSGGGDDKKS) show a composition bias toward basic and acidic residues. The tract at residues 830-858 (AKKQEGGAEKAAEDSGGGDDKKSKTCLML) is disordered. Position 855 is a cysteine methyl ester (Cys855). The S-geranylgeranyl cysteine moiety is linked to residue Cys855. Residues 856–858 (LML) constitute a propeptide, removed in mature form.

It belongs to the cyclic nucleotide phosphodiesterase family. As to quaternary structure, composed of two alpha' subunits that are associated with 3 smaller proteins of 11, 13, and 15 kDa. Requires a divalent metal cation as cofactor.

The protein resides in the cell membrane. It carries out the reaction 3',5'-cyclic GMP + H2O = GMP + H(+). Functionally, as cone-specific cGMP phosphodiesterase, it plays an essential role in light detection and cone phototransduction by rapidly decreasing intracellular levels of cGMP. The chain is Cone cGMP-specific 3',5'-cyclic phosphodiesterase subunit alpha' (PDE6C) from Homo sapiens (Human).